Consider the following 428-residue polypeptide: Light-independent protochlorophyllide reductase subunit N (428 aa).

Positions 29, 54, and 115 each coordinate [4Fe-4S] cluster.

This sequence belongs to the BchN/ChlN family. Protochlorophyllide reductase is composed of three subunits; BchL, BchN and BchB. Forms a heterotetramer of two BchB and two BchN subunits. It depends on [4Fe-4S] cluster as a cofactor.

It carries out the reaction chlorophyllide a + oxidized 2[4Fe-4S]-[ferredoxin] + 2 ADP + 2 phosphate = protochlorophyllide a + reduced 2[4Fe-4S]-[ferredoxin] + 2 ATP + 2 H2O. Its pathway is porphyrin-containing compound metabolism; bacteriochlorophyll biosynthesis (light-independent). In terms of biological role, component of the dark-operative protochlorophyllide reductase (DPOR) that uses Mg-ATP and reduced ferredoxin to reduce ring D of protochlorophyllide (Pchlide) to form chlorophyllide a (Chlide). This reaction is light-independent. The NB-protein (BchN-BchB) is the catalytic component of the complex. The protein is Light-independent protochlorophyllide reductase subunit N of Roseobacter denitrificans (strain ATCC 33942 / OCh 114) (Erythrobacter sp. (strain OCh 114)).